The primary structure comprises 204 residues: MSYKHLISACIFSSLCLGQVNAVLAEDKLPPSNTSTGQHSELSVDNDNLWQRLLRNISLAWDSPNQELYIPLNTWHNRWTYDDDKIESYNERPWGIGYGKYRYDENNNWHAVYAMAFMDSHNEVEPIIGYGYQKMWIPAEMDGWRFGVGFTASITARHEYHYIPIPLPLPLISIEYNKFSLQTTYIPGTYNNGNVLFTWMRWQF.

A signal peptide spans 1–25 (MSYKHLISACIFSSLCLGQVNAVLA). Catalysis depends on residues histidine 76, aspartate 119, and serine 120.

Belongs to the lipid A palmitoyltransferase family. As to quaternary structure, homodimer.

It is found in the cell outer membrane. It catalyses the reaction a lipid A + a 1,2-diacyl-sn-glycero-3-phosphocholine = a hepta-acyl lipid A + a 2-acyl-sn-glycero-3-phosphocholine. It carries out the reaction a lipid IVA + a 1,2-diacyl-sn-glycero-3-phosphocholine = a lipid IVB + a 2-acyl-sn-glycero-3-phosphocholine. The enzyme catalyses a lipid IIA + a 1,2-diacyl-sn-glycero-3-phosphocholine = a lipid IIB + a 2-acyl-sn-glycero-3-phosphocholine. Transfers a fatty acid residue from the sn-1 position of a phospholipid to the N-linked hydroxyfatty acid chain on the proximal unit of lipid A or its precursors. The chain is Lipid A acyltransferase PagP from Yersinia enterocolitica serotype O:8 / biotype 1B (strain NCTC 13174 / 8081).